The following is a 377-amino-acid chain: Succinyl-diaminopimelate desuccinylase (377 aa).

Residue histidine 67 participates in Zn(2+) binding. Residue aspartate 69 is part of the active site. Residue aspartate 100 participates in Zn(2+) binding. The Proton acceptor role is filled by glutamate 134. 3 residues coordinate Zn(2+): glutamate 135, glutamate 163, and histidine 349.

The protein belongs to the peptidase M20A family. DapE subfamily. In terms of assembly, homodimer. It depends on Zn(2+) as a cofactor. Requires Co(2+) as cofactor.

The catalysed reaction is N-succinyl-(2S,6S)-2,6-diaminopimelate + H2O = (2S,6S)-2,6-diaminopimelate + succinate. Its pathway is amino-acid biosynthesis; L-lysine biosynthesis via DAP pathway; LL-2,6-diaminopimelate from (S)-tetrahydrodipicolinate (succinylase route): step 3/3. Catalyzes the hydrolysis of N-succinyl-L,L-diaminopimelic acid (SDAP), forming succinate and LL-2,6-diaminopimelate (DAP), an intermediate involved in the bacterial biosynthesis of lysine and meso-diaminopimelic acid, an essential component of bacterial cell walls. This chain is Succinyl-diaminopimelate desuccinylase, found in Dechloromonas aromatica (strain RCB).